The chain runs to 187 residues: MSHLALKDLFSGFFVIDDEEEVEVPDKQQQVNEAPAKEQSQQTTKQNAIKSVPQKSASRYTTTSEERNNRMSNYSKNNSRNVVTMNNATPNNASQESSKMCLFEPRVFSDTQDIADELKNRRATLVNLQRIDKVSAKRIIDFLSGTVYAIGGDIQRVGTDIFLCTPDNVEVAGSITDHIENMEHSFD.

Residues 21–97 (EVEVPDKQQQ…ATPNNASQES (77 aa)) form a disordered region. Composition is skewed to polar residues over residues 38 to 63 (EQSQ…YTTT) and 70 to 97 (RMSN…SQES).

This sequence belongs to the SepF family. Homodimer. Interacts with FtsZ.

The protein localises to the cytoplasm. In terms of biological role, cell division protein that is part of the divisome complex and is recruited early to the Z-ring. Probably stimulates Z-ring formation, perhaps through the cross-linking of FtsZ protofilaments. Its function overlaps with FtsA. This Staphylococcus aureus (strain Mu3 / ATCC 700698) protein is Cell division protein SepF.